Reading from the N-terminus, the 140-residue chain is Con-Ins Im2 (140 aa).

The first 29 residues, 1–29 (MALTWPSSPPVLLTLLLSLLALQLCAVYG), serve as a signal peptide directing secretion. Cystine bridges form between C35/C123, C50/C126, C62/C139, and C125/C130. Positions 64–110 (PRGYVSNWFTKRSAPNKPAETFVDQNLRGVLLNKREALSYLRPREPR) are cleaved as a propeptide — c peptide. E134 is subject to 4-carboxyglutamate; partial.

It belongs to the insulin family. In terms of assembly, heterodimer of A and B chains; disulfide-linked. As to expression, expressed by the venom gland.

The protein localises to the secreted. Functionally, this venom insulin facilitates prey capture by rapidly inducing hypoglycemic shock. Intraperitoneal injection of this peptide into zebrafish lowers blood glucose with the same potency than human insulin. In vivo, when applied to water, this peptide reduces overall locomotor activity of zebrafish larvae, observed as a significant decrease in the percentage of time spent swimming and movement frequency. The protein is Con-Ins Im2 of Conus imperialis (Imperial cone).